A 224-amino-acid chain; its full sequence is Prolactin-2C3 (224 aa).

Residues 1-29 (MLPSSIQPCSWILLLLLVNSSLLWKNVAS) form the signal peptide. N-linked (GlcNAc...) asparagine glycosylation occurs at N19. A disulfide bridge connects residues C33 and C40. N-linked (GlcNAc...) asparagine glycosylation is found at N57, N75, and N88. 2 disulfide bridges follow: C87–C199 and C216–C224.

Belongs to the somatotropin/prolactin family. Post-translationally, N-glycosylated and sialylated. As to expression, expressed in placenta and hair follicles, with highest expression levels detected in the outer root sheath and no expression detected in bulb. Expressed in placenta, skin wounds, keratinocytes and weakly in embryonic fibroblasts. Expressed in brain, cerebellum and in Neuro-2a cell line. Not detected in liver, kidney, ovary, pituitary gland and brain.

The protein resides in the secreted. The protein localises to the endoplasmic reticulum. Its function is as follows. May have a role in embryonic development. It is likely to provide a growth stimulus to target cells in maternal and fetal tissues during the development of the embryo at mid-gestation. May play a role during wound healing and in the hair follicle cycle as a growth factor and/or an angiogenesis factor. May play a role in microvilli formation and cell proliferation of neuroblastoma cells. In Mus musculus (Mouse), this protein is Prolactin-2C3 (Prl2c3).